A 462-amino-acid polypeptide reads, in one-letter code: Lysyl endopeptidase (462 aa).

An N-terminal signal peptide occupies residues 1–24 (MHKRTYLNACLVLALAAGASQALA). Positions 25-211 (APGASEMAGD…VSYFADSLYK (187 aa)) are excised as a propeptide. 3 disulfide bridges follow: cysteine 224-cysteine 435, cysteine 230-cysteine 305, and cysteine 262-cysteine 284. Residues histidine 283, aspartate 333, and serine 409 each act as charge relay system in the active site.

This sequence belongs to the peptidase S1 family. Post-translationally, experiments performed in E.coli. Processing of pro-endopeptidase to mature endopeptidase is probably autocatalytic, as mutations in the probable active site residues prevent processing, and purified inactive pro-endopeptidase disappears in the presence of active endopeptidase.

It is found in the secreted. The catalysed reaction is Preferential cleavage: Lys-|-Xaa, including Lys-|-Pro.. In terms of biological role, lysine-specific endoprotease. Involved in corneal virulence. This is Lysyl endopeptidase (prpL) from Pseudomonas aeruginosa (strain ATCC 15692 / DSM 22644 / CIP 104116 / JCM 14847 / LMG 12228 / 1C / PRS 101 / PAO1).